The chain runs to 185 residues: MRIGLYGGSFNPAHAGHLHVSRTALRRLRLDRVWWLVTPGNPLKDHGVLAPLDERVAQARALATDPRIAVTGFEGGIGSRYTADTLRWLVRRQPALHFVWIMGADSLGTFHRWRRFDEILSLMPVAVIDRPGYTLTAPSARAAQAFASARIQEADAPTLAIRPTPAWTFLHGPRSALSSTALRTR.

The protein belongs to the NadD family.

The catalysed reaction is nicotinate beta-D-ribonucleotide + ATP + H(+) = deamido-NAD(+) + diphosphate. It participates in cofactor biosynthesis; NAD(+) biosynthesis; deamido-NAD(+) from nicotinate D-ribonucleotide: step 1/1. In terms of biological role, catalyzes the reversible adenylation of nicotinate mononucleotide (NaMN) to nicotinic acid adenine dinucleotide (NaAD). In Methylorubrum extorquens (strain PA1) (Methylobacterium extorquens), this protein is Probable nicotinate-nucleotide adenylyltransferase.